We begin with the raw amino-acid sequence, 430 residues long: Tyrosine--tRNA ligase (430 aa).

An L-tyrosine-binding site is contributed by Tyr-32. Residues 37 to 46 carry the 'HIGH' region motif; it reads PTADSLHIGH. Residues Tyr-172 and Gln-176 each contribute to the L-tyrosine site. Positions 232 to 236 match the 'KMSKS' region motif; that stretch reads KFGKT. Lys-235 is an ATP binding site. Residues 362–430 form the S4 RNA-binding domain; it reads ISLVDLLADA…KKSYYLIIVE (69 aa).

Belongs to the class-I aminoacyl-tRNA synthetase family. TyrS type 1 subfamily. As to quaternary structure, homodimer.

The protein resides in the cytoplasm. The catalysed reaction is tRNA(Tyr) + L-tyrosine + ATP = L-tyrosyl-tRNA(Tyr) + AMP + diphosphate + H(+). In terms of biological role, catalyzes the attachment of tyrosine to tRNA(Tyr) in a two-step reaction: tyrosine is first activated by ATP to form Tyr-AMP and then transferred to the acceptor end of tRNA(Tyr). In Porphyromonas gingivalis (strain ATCC BAA-308 / W83), this protein is Tyrosine--tRNA ligase.